The primary structure comprises 200 residues: Holliday junction resolvase RecU (200 aa).

Positions 82, 84, 97, and 116 each coordinate Mg(2+).

Belongs to the RecU family. Requires Mg(2+) as cofactor.

The protein resides in the cytoplasm. It carries out the reaction Endonucleolytic cleavage at a junction such as a reciprocal single-stranded crossover between two homologous DNA duplexes (Holliday junction).. Functionally, endonuclease that resolves Holliday junction intermediates in genetic recombination. Cleaves mobile four-strand junctions by introducing symmetrical nicks in paired strands. Promotes annealing of linear ssDNA with homologous dsDNA. Required for DNA repair, homologous recombination and chromosome segregation. In Streptococcus sanguinis (strain SK36), this protein is Holliday junction resolvase RecU.